The following is a 169-amino-acid chain: NAD(P)H-quinone oxidoreductase subunit J, chloroplastic (169 aa).

Belongs to the complex I 30 kDa subunit family. As to quaternary structure, NDH is composed of at least 16 different subunits, 5 of which are encoded in the nucleus.

The protein resides in the plastid. Its subcellular location is the chloroplast thylakoid membrane. The enzyme catalyses a plastoquinone + NADH + (n+1) H(+)(in) = a plastoquinol + NAD(+) + n H(+)(out). The catalysed reaction is a plastoquinone + NADPH + (n+1) H(+)(in) = a plastoquinol + NADP(+) + n H(+)(out). Functionally, NDH shuttles electrons from NAD(P)H:plastoquinone, via FMN and iron-sulfur (Fe-S) centers, to quinones in the photosynthetic chain and possibly in a chloroplast respiratory chain. The immediate electron acceptor for the enzyme in this species is believed to be plastoquinone. Couples the redox reaction to proton translocation, and thus conserves the redox energy in a proton gradient. The protein is NAD(P)H-quinone oxidoreductase subunit J, chloroplastic of Staurastrum punctulatum (Green alga).